The primary structure comprises 179 residues: Large ribosomal subunit protein uL5 (179 aa).

This sequence belongs to the universal ribosomal protein uL5 family. As to quaternary structure, part of the 50S ribosomal subunit; part of the 5S rRNA/L5/L18/L25 subcomplex. Contacts the 5S rRNA and the P site tRNA. Forms a bridge to the 30S subunit in the 70S ribosome.

This is one of the proteins that bind and probably mediate the attachment of the 5S RNA into the large ribosomal subunit, where it forms part of the central protuberance. In the 70S ribosome it contacts protein S13 of the 30S subunit (bridge B1b), connecting the 2 subunits; this bridge is implicated in subunit movement. Contacts the P site tRNA; the 5S rRNA and some of its associated proteins might help stabilize positioning of ribosome-bound tRNAs. The protein is Large ribosomal subunit protein uL5 of Listeria innocua serovar 6a (strain ATCC BAA-680 / CLIP 11262).